The primary structure comprises 314 residues: Acetyl-coenzyme A carboxylase carboxyl transferase subunit alpha (314 aa).

Positions 32 to 289 (EIDMLEASLK…KKMFLKHLNE (258 aa)) constitute a CoA carboxyltransferase C-terminal domain.

This sequence belongs to the AccA family. Acetyl-CoA carboxylase is a heterohexamer composed of biotin carboxyl carrier protein (AccB), biotin carboxylase (AccC) and two subunits each of ACCase subunit alpha (AccA) and ACCase subunit beta (AccD).

It is found in the cytoplasm. The enzyme catalyses N(6)-carboxybiotinyl-L-lysyl-[protein] + acetyl-CoA = N(6)-biotinyl-L-lysyl-[protein] + malonyl-CoA. It functions in the pathway lipid metabolism; malonyl-CoA biosynthesis; malonyl-CoA from acetyl-CoA: step 1/1. In terms of biological role, component of the acetyl coenzyme A carboxylase (ACC) complex. First, biotin carboxylase catalyzes the carboxylation of biotin on its carrier protein (BCCP) and then the CO(2) group is transferred by the carboxyltransferase to acetyl-CoA to form malonyl-CoA. This chain is Acetyl-coenzyme A carboxylase carboxyl transferase subunit alpha, found in Staphylococcus epidermidis (strain ATCC 35984 / DSM 28319 / BCRC 17069 / CCUG 31568 / BM 3577 / RP62A).